The chain runs to 120 residues: Non-specific lipid-transfer protein 1 (120 aa).

The signal sequence occupies residues 1–25 (MARSMKLACVALVICMVVIAPMAEA). 4 disulfides stabilise this stretch: Cys-29-Cys-78, Cys-39-Cys-55, Cys-56-Cys-101, and Cys-76-Cys-115. Residue Phe-120 is a propeptide.

It belongs to the plant LTP family. In terms of tissue distribution, expressed in roots, stem, leaves and tendrils of the mature plant.

Functionally, plant non-specific lipid-transfer proteins transfer phospholipids as well as galactolipids across membranes. May play a role in wax or cutin deposition in the cell walls of expanding epidermal cells and certain secretory tissues. Binds saturated and unsaturated lipids, jasmonic acid and lysolipids. Has antifungal activity against A.niger VKM F-2259 (IC(50)=40 uM), F.oxysporum TCXA-4 (IC(50)=20-40), F.solani VKM F-142 (IC(50)=20-40 uM) and N.crassa VKM F-184 (IC(50)=40 uM). Has weak antibacterial activity against A.tumefaciens A281, C.michiganensis VKM Ac-1144 and P.syringae VKM B-1546. The sequence is that of Non-specific lipid-transfer protein 1 from Pisum sativum (Garden pea).